An 84-amino-acid polypeptide reads, in one-letter code: Delta-conotoxin-like MVIA (84 aa).

A signal peptide spans Met-1 to Ala-22. A propeptide spanning residues Asp-23–Asn-49 is cleaved from the precursor. 3 cysteine pairs are disulfide-bonded: Cys-54-Cys-69, Cys-61-Cys-73, and Cys-68-Cys-77. Pro-65 bears the 4-hydroxyproline mark. Ser-83 is subject to Serine amide.

The protein belongs to the conotoxin O1 superfamily. In terms of tissue distribution, expressed by the venom duct.

The protein resides in the secreted. Delta-conotoxins bind to site 6 of voltage-gated sodium channels (Nav) and inhibit the inactivation process. This chain is Delta-conotoxin-like MVIA, found in Conus magus (Magical cone).